Reading from the N-terminus, the 253-residue chain is Ribosomal RNA small subunit methyltransferase J (253 aa).

S-adenosyl-L-methionine is bound by residues 123–124 (ER) and aspartate 176.

Belongs to the methyltransferase superfamily. RsmJ family.

Its subcellular location is the cytoplasm. The enzyme catalyses guanosine(1516) in 16S rRNA + S-adenosyl-L-methionine = N(2)-methylguanosine(1516) in 16S rRNA + S-adenosyl-L-homocysteine + H(+). Functionally, specifically methylates the guanosine in position 1516 of 16S rRNA. The sequence is that of Ribosomal RNA small subunit methyltransferase J from Magnetococcus marinus (strain ATCC BAA-1437 / JCM 17883 / MC-1).